Consider the following 221-residue polypeptide: Uracil-DNA glycosylase 1 (221 aa).

The Proton acceptor role is filled by aspartate 61.

Belongs to the uracil-DNA glycosylase (UDG) superfamily. UNG family.

Its subcellular location is the cytoplasm. It catalyses the reaction Hydrolyzes single-stranded DNA or mismatched double-stranded DNA and polynucleotides, releasing free uracil.. In terms of biological role, excises uracil residues from the DNA which can arise as a result of misincorporation of dUMP residues by DNA polymerase or due to deamination of cytosine. The protein is Uracil-DNA glycosylase 1 of Listeria monocytogenes serotype 4b (strain F2365).